The chain runs to 104 residues: MFGQWEFDVSPTGGIAVASTEVEHFAGSQHEVDTAEVPSAAWGWSRIDHRTWHIVGLCIFGFLLAMLRGNHVGHVEDWFLITFAAVVLFVLARDLWGRRRGWIR.

Transmembrane regions (helical) follow at residues 47-67 and 72-92; these read IDHRTWHIVGLCIFGFLLAML and VGHVEDWFLITFAAVVLFVLA.

The protein to M.leprae ML1584.

It localises to the cell membrane. This is an uncharacterized protein from Mycobacterium tuberculosis (strain CDC 1551 / Oshkosh).